The sequence spans 105 residues: Delta-hexatoxin-Mg1a (105 aa).

A signal peptide spans 1-18 (MKTLVIACVALVLVVVHG). The propeptide occupies 19–60 (EVIEEVNEKQLQESVEEKYSLLQRLEKLDEAITAEENRNSRV). Intrachain disulfides connect cysteine 63-cysteine 77, cysteine 70-cysteine 82, cysteine 76-cysteine 93, and cysteine 78-cysteine 105.

This sequence belongs to the neurotoxin 06 (delta-actx) family. Expressed by the venom gland.

Its subcellular location is the secreted. In terms of biological role, selectively slows channel inactivation of mammalian Nav1.1/SCN1A, Nav1.3/SCN3A, and Nav1.6/SCN8A and shows higher affinity for insect Nav1/para channels (site 3). Induces tonic repetitive firing of nerve impulses in insect neurons accompanied by plateau potentials. The chain is Delta-hexatoxin-Mg1a from Macrothele gigas (Japanese funnel web spider).